The sequence spans 382 residues: MKLHEYEAKELFLRYGVKIPPGKLALTPDEVRKIAEEIGTPVVLKAQVVVAGRGKAGGIKIAQTPEEAYELSKKMFGMNIKGLVVRKLYVTKYVEVEREMYLSLIIDRASRRYLFLASPIGGVDIEEIAKTSPEKIKKVYVDPSIGLRDYHIRSIISWLGFKPGSQQWQQTASVIQAMYRIMVDYDAELVETNPLALSKEGEVIPLDARVIVDDNALFKHPDLEKALEEDPRDITEFEAYAKKIGFHYVELDGDIGIIGNGAGLTMATMDLVYHFGGRPANFLDIGGGASREVVKEAVKVLLNHPRVKVIFVNIFGGITRADEVALGIKDALAEVKEHTKKIVVRIKGTNEEQGKAILSEIGIPLFENAEEAAKKAVELAKI.

Positions 9–240 constitute an ATP-grasp domain; it reads KELFLRYGVK…PRDITEFEAY (232 aa). ATP-binding positions include Lys-45, 52-54, Val-94, and Glu-99; that span reads GRG. Mg(2+)-binding residues include Asn-193 and Asp-207. Substrate is bound by residues Asn-260 and 317 to 319; that span reads GIT.

Belongs to the succinate/malate CoA ligase beta subunit family. Heterotetramer of two alpha and two beta subunits. Requires Mg(2+) as cofactor.

The catalysed reaction is succinate + ATP + CoA = succinyl-CoA + ADP + phosphate. The enzyme catalyses GTP + succinate + CoA = succinyl-CoA + GDP + phosphate. Its pathway is carbohydrate metabolism; tricarboxylic acid cycle; succinate from succinyl-CoA (ligase route): step 1/1. Functionally, succinyl-CoA synthetase functions in the citric acid cycle (TCA), coupling the hydrolysis of succinyl-CoA to the synthesis of either ATP or GTP and thus represents the only step of substrate-level phosphorylation in the TCA. The beta subunit provides nucleotide specificity of the enzyme and binds the substrate succinate, while the binding sites for coenzyme A and phosphate are found in the alpha subunit. This chain is Succinate--CoA ligase [ADP-forming] subunit beta, found in Pyrobaculum islandicum (strain DSM 4184 / JCM 9189 / GEO3).